The sequence spans 1370 residues: DNA-directed RNA polymerase subunit beta (1370 aa).

Belongs to the RNA polymerase beta chain family. The RNAP catalytic core consists of 2 alpha, 1 beta, 1 beta' and 1 omega subunit. When a sigma factor is associated with the core the holoenzyme is formed, which can initiate transcription.

The catalysed reaction is RNA(n) + a ribonucleoside 5'-triphosphate = RNA(n+1) + diphosphate. Functionally, DNA-dependent RNA polymerase catalyzes the transcription of DNA into RNA using the four ribonucleoside triphosphates as substrates. This is DNA-directed RNA polymerase subunit beta from Verminephrobacter eiseniae (strain EF01-2).